The chain runs to 360 residues: D-alanine--D-alanine ligase (360 aa).

An ATP-grasp domain is found at 139 to 344 (KDVFAQAGLA…YPELIEKLVS (206 aa)). 172 to 227 (EQVLGYPCFVKPANMGSSVGISKCRSKEELQTAFDLAFQYDRRVVVEEGVVGREIE) is a binding site for ATP. The Mg(2+) site is built by Asp298, Glu311, and Asn313.

Belongs to the D-alanine--D-alanine ligase family. Mg(2+) is required as a cofactor. Mn(2+) serves as cofactor.

Its subcellular location is the cytoplasm. It catalyses the reaction 2 D-alanine + ATP = D-alanyl-D-alanine + ADP + phosphate + H(+). Its pathway is cell wall biogenesis; peptidoglycan biosynthesis. Functionally, cell wall formation. The sequence is that of D-alanine--D-alanine ligase from Bacillus pumilus (strain SAFR-032).